Consider the following 353-residue polypeptide: Methylthioribose-1-phosphate isomerase (353 aa).

Residues 48 to 50, R94, and Q201 each bind substrate; that span reads RGA. D242 acts as the Proton donor in catalysis. 252 to 253 is a substrate binding site; that stretch reads NK.

The protein belongs to the eIF-2B alpha/beta/delta subunits family. MtnA subfamily.

It carries out the reaction 5-(methylsulfanyl)-alpha-D-ribose 1-phosphate = 5-(methylsulfanyl)-D-ribulose 1-phosphate. The protein operates within amino-acid biosynthesis; L-methionine biosynthesis via salvage pathway; L-methionine from S-methyl-5-thio-alpha-D-ribose 1-phosphate: step 1/6. Functionally, catalyzes the interconversion of methylthioribose-1-phosphate (MTR-1-P) into methylthioribulose-1-phosphate (MTRu-1-P). In Roseiflexus sp. (strain RS-1), this protein is Methylthioribose-1-phosphate isomerase.